A 638-amino-acid chain; its full sequence is MSRPTTPLLDKAPIPEALRALPESDLPQLAQELRAELIDVVSTTGGHLGAGLGVVELTVALHHVFDTPHDRIIWDVGHQAYPHKILTGRRDRIRTLRQTGGLSGFTKRTESEYDPFGAAHSSTSISAGLGMAVASDLSGEKRNVIAVIGDGSMSAGMAYEAMNNAGALDARLIVILNDNDMSIAPPTGAMSAYLARLVSGKTYRSVREAAKQVAKKLPKFLQDKARKSEEYARAFFTGGTLFEELGFYYVGPIDGHNLDHLLPILKNVRDTQEGPVLIHVVTQKGKGYAPAEAAADKYHGVNKFDVITGKQSKPPANAPSYTKIFGTSLIEEARHDDRIVAITAAMPSGTGLDLFGEVFPQRTFDVGIAEQHAVTFAAGLASEGYKPFCAIYSTFLQRGYDQVVHDVSIQNLPVRFPIDRAGLVGADGPTHAGSFDTGFLAALPGFVVMAASDEAELRHMVRTAAEYDEGPISFRYPRGDGVGVDLPERGQLLEIGKGRIVREGTKVALLSFGTRLQECLAAADELGAAGLSTTVADARFAKPLDHDLIRRLAREHEVLVMVEEGAVGGFASHVLQFLATDGLLDRGLKVRALTLPDTYQDHGKPDAMYAEAGLDRTGIVHAVFAALGREAVAAPFSA.

Residues His78 and 119–121 (AHS) contribute to the thiamine diphosphate site. Residue Asp150 coordinates Mg(2+). Thiamine diphosphate contacts are provided by residues 151-152 (GS), Asn179, Tyr288, and Glu370. Asn179 is a Mg(2+) binding site.

It belongs to the transketolase family. DXPS subfamily. In terms of assembly, homodimer. Mg(2+) serves as cofactor. It depends on thiamine diphosphate as a cofactor.

The catalysed reaction is D-glyceraldehyde 3-phosphate + pyruvate + H(+) = 1-deoxy-D-xylulose 5-phosphate + CO2. Its pathway is metabolic intermediate biosynthesis; 1-deoxy-D-xylulose 5-phosphate biosynthesis; 1-deoxy-D-xylulose 5-phosphate from D-glyceraldehyde 3-phosphate and pyruvate: step 1/1. Its function is as follows. Catalyzes the acyloin condensation reaction between C atoms 2 and 3 of pyruvate and glyceraldehyde 3-phosphate to yield 1-deoxy-D-xylulose-5-phosphate (DXP). The polypeptide is 1-deoxy-D-xylulose-5-phosphate synthase (Brucella anthropi (strain ATCC 49188 / DSM 6882 / CCUG 24695 / JCM 21032 / LMG 3331 / NBRC 15819 / NCTC 12168 / Alc 37) (Ochrobactrum anthropi)).